Here is a 367-residue protein sequence, read N- to C-terminus: Adenosine deaminase (367 aa).

Zn(2+)-binding residues include His46 and His48. A purine D-ribonucleoside is bound by residues His48–Asp50, Asp176, and Gly205. The gating helix loop; regulates binding affinity for substrates and thus substrate selectivity stretch occupies residues Thr174–Ala188. Position 230 (His230) interacts with Zn(2+). 3 residues coordinate a purine D-ribonucleoside: Glu233, His257, and Asp314. A Zn(2+)-binding site is contributed by Asp314.

The protein belongs to the metallo-dependent hydrolases superfamily. Adenosine and AMP deaminases family. It depends on Zn(2+) as a cofactor.

The catalysed reaction is adenosine + H2O + H(+) = inosine + NH4(+). It carries out the reaction S-methyl-5'-thioadenosine + H2O + H(+) = S-methyl-5'-thioinosine + NH4(+). It participates in purine metabolism; purine nucleoside salvage. Inhibited by coformycin and methylthiocoformycin (MT-coformycin). Catalyzes the hydrolytic deamination of adenosine to produce inosine. Unlike mammalian adenosine deaminases, also catalyzes the deamination of 5'-methylthioadenosine (MTA), a by-product of polyamine biosynthesis, to produce 5'-methylthioinosine (MTI). Plays an essential role in the purine salvage pathway which allows the parasite to use host cell purines for the synthesis of nucleic acids. In Plasmodium falciparum (isolate 3D7), this protein is Adenosine deaminase.